The sequence spans 340 residues: Heat-inducible transcription repressor HrcA (340 aa).

Belongs to the HrcA family.

Functionally, negative regulator of class I heat shock genes (grpE-dnaK-dnaJ and groELS operons). Prevents heat-shock induction of these operons. The sequence is that of Heat-inducible transcription repressor HrcA from Mycoplasma capricolum subsp. capricolum (strain California kid / ATCC 27343 / NCTC 10154).